Here is an 849-residue protein sequence, read N- to C-terminus: MTASVARFIESFIPENYNLFLDINRSEKTFTGNVAITGEAIDNHISLHQKDLTINSVLLDNESLNFQMDDANEAFHIELPETGVLTIFIEFSGRITDNMTGIYPSYYTYNGEKKEIISTQFEISHFAREAFPCVDEPEAKATFDLSLKFDAEEGDTALSNMPEINSHLREETGVWTFETTPRMSTYLLAFGFGALHGKTAKTKNGTEVGVFATVAQAENSFDFALDIAVRVIEFYEDYFQVKYPIPLSYHLALPDFSAGAMENWGLVTYREVYLLVDENSSAASRQQVALVVAHELAHQWFGNLVTMKWWDDLWLNESFANMMEYVSVNAIEPSWNIFEGFPNKLGVPNALQRDATDGVQSVHMEVSHPDEINTLFDSAIVYAKGSRLMHMLRRWLGDEAFAKGLKAYFEKHQYNNTVGRDLWNALSEASGKDVSSFMDTWLEQPGYPVVSAEVVDDTLILSQKQFFIGEHEDKGRLWEIPLNTNWNGLPDTLSGERIEIPNYSQLATENNGVLRLNTANTAHYITDYQGQLLDNILEDFANLDTVSKLQILQERRLLAESGRISYASLVGLLDLVEKEESFFLISQAKSQILAGLKRFIDEDTEAEVHYKALVRRQFQNDFERLGFDAKEGESDEDEMVRQTALSYLIEADYQPTVLAAANVFQAHKENIESIPASIRGLVLINQMKQENSLSLVEEYINAYVATNDSNFRRQLTQALSYLKNQEGLDYVLGQLKDKNVVKPQDLYLWYMNFLSKSFAQETVWDWAKENWEWIKAALGGDMSFDSFVNIPAGIFKNQERLDQYIAFFEPQTSDKALERNILMGIKTIAARVDLIEKEKAAVESALKDY.

Residues glutamate 122 and 259 to 263 (GAMEN) each bind substrate. Histidine 294 contributes to the Zn(2+) binding site. Residue glutamate 295 is the Proton acceptor of the active site. 2 residues coordinate Zn(2+): histidine 298 and glutamate 317.

Belongs to the peptidase M1 family. Monomer. Requires Zn(2+) as cofactor.

The protein resides in the cytoplasm. The catalysed reaction is Release of an N-terminal amino acid, Xaa-|-Yaa- from a peptide, amide or arylamide. Xaa is preferably Ala, but may be most amino acids including Pro (slow action). When a terminal hydrophobic residue is followed by a prolyl residue, the two may be released as an intact Xaa-Pro dipeptide.. In terms of biological role, aminopeptidase with broad substrate specificity to several peptides. It has more affinity for oligopeptides than for dipeptides. It plays an essential role in the metabolism, it may be involved in nitrogen supply or protein turnover. The chain is Aminopeptidase N (pepN) from Lactococcus lactis subsp. lactis (Streptococcus lactis).